An 81-amino-acid polypeptide reads, in one-letter code: Putative phytosulfokines 6 (81 aa).

Positions 1-20 (MKQSLCLAVLFLILSTSSSA) are cleaved as a signal peptide. The propeptide occupies 21–72 (IRRGKEDQEINPLVSATSVEEDSVNKLMGMEYCGEGDEECLRRRMMTESHLD). Sulfotyrosine is present on residues Tyr73 and Tyr75. The propeptide occupies 78-81 (HHKH).

Belongs to the phytosulfokine family. Sulfation is important for activity and for the binding to a putative membrane receptor. Post-translationally, PSK-beta is an enzymatic derivative of PSK-alpha. Expressed in roots, leaves, stems, flowers and siliques. Most abundant in vascular bundles and in root tips.

The protein localises to the secreted. Promotes plant cell differentiation, organogenesis and somatic embryogenesis as well as cell proliferation. The protein is Putative phytosulfokines 6 (PSK6) of Arabidopsis thaliana (Mouse-ear cress).